The following is a 2174-amino-acid chain: Mediator of RNA polymerase II transcription subunit 13 (2174 aa).

Ser395 is subject to Phosphoserine. The segment at 435 to 477 (RNAGQQGQAPSLGQQQQILPKHKTNEKQEKSEKPQKRPLTPFH) is disordered. Positions 438 to 451 (GQQGQAPSLGQQQQ) are enriched in low complexity. Positions 457-469 (KTNEKQEKSEKPQ) are enriched in basic and acidic residues. Residues Ser500, Ser504, Ser530, and Ser537 each carry the phosphoserine modification. The span at 709–730 (FPDKKDRQNSEREAGKKHKVED) shows a compositional bias: basic and acidic residues. 3 disordered regions span residues 709-735 (FPDK…TSSV), 749-769 (SPSI…PSTS), and 787-816 (FNSD…ESKT). The segment covering 805–815 (SDDKASCKESK) has biased composition (basic and acidic residues). 2 positions are modified to phosphoserine: Ser826 and Ser890. The segment at 959–1054 (FIKEGDGSNM…ASTPSTCRPL (96 aa)) is disordered. Residues 992-1003 (PPSNSGAGILPS) are compositionally biased toward low complexity. Pro residues predominate over residues 1004 to 1015 (PSTPRFPTPRTP). Ser1029 is subject to Phosphoserine. Over residues 1040 to 1053 (DLYSPASTPSTCRP) the composition is skewed to polar residues. 2 consecutive short sequence motifs (LXXLL motif) follow at residues 1188–1192 (LILLL) and 1279–1283 (LRMLL). 2 stretches are compositionally biased toward polar residues: residues 1484-1498 (SQSL…NTGN) and 1563-1606 (SMNS…SLPT). Disordered stretches follow at residues 1484–1505 (SQSL…PSAT), 1557–1617 (SFPP…ESTM), and 2015–2048 (LPAS…RLLS).

It belongs to the Mediator complex subunit 13 family. Component of the Mediator complex, which is composed of MED1, MED4, MED6, MED7, MED8, MED9, MED10, MED11, MED12, MED13, MED13L, MED14, MED15, MED16, MED17, MED18, MED19, MED20, MED21, MED22, MED23, MED24, MED25, MED26, MED27, MED29, MED30, MED31, CCNC, CDK8 and CDC2L6/CDK11. The MED12, MED13, CCNC and CDK8 subunits form a distinct module termed the CDK8 module. Mediator containing the CDK8 module is less active than Mediator lacking this module in supporting transcriptional activation. Individual preparations of the Mediator complex lacking one or more distinct subunits have been variously termed ARC, CRSP, DRIP, PC2, SMCC and TRAP. As to expression, ubiquitous.

The protein localises to the nucleus. Functionally, component of the Mediator complex, a coactivator involved in the regulated transcription of nearly all RNA polymerase II-dependent genes. Mediator functions as a bridge to convey information from gene-specific regulatory proteins to the basal RNA polymerase II transcription machinery. Mediator is recruited to promoters by direct interactions with regulatory proteins and serves as a scaffold for the assembly of a functional preinitiation complex with RNA polymerase II and the general transcription factors. The protein is Mediator of RNA polymerase II transcription subunit 13 of Homo sapiens (Human).